Reading from the N-terminus, the 115-residue chain is NADH-ubiquinone oxidoreductase chain 3 (115 aa).

A run of 3 helical transmembrane segments spans residues 4–24, 55–75, and 84–104; these read IMAM…AFWL, FFLV…LLPL, and MFLT…GLAY.

Belongs to the complex I subunit 3 family. Core subunit of respiratory chain NADH dehydrogenase (Complex I) which is composed of 45 different subunits. Interacts with TMEM186. Interacts with TMEM242.

It localises to the mitochondrion inner membrane. It catalyses the reaction a ubiquinone + NADH + 5 H(+)(in) = a ubiquinol + NAD(+) + 4 H(+)(out). Its function is as follows. Core subunit of the mitochondrial membrane respiratory chain NADH dehydrogenase (Complex I) which catalyzes electron transfer from NADH through the respiratory chain, using ubiquinone as an electron acceptor. Essential for the catalytic activity of complex I. The polypeptide is NADH-ubiquinone oxidoreductase chain 3 (Phyllotis darwinii (Darwin's leaf-eared mouse)).